The primary structure comprises 192 residues: Ion-translocating oxidoreductase complex subunit B (192 aa).

The hydrophobic stretch occupies residues 1–26; that stretch reads MNAIWIAVAAVSLLGLAFGAILGYAS. The 4Fe-4S domain occupies 32–91; sequence EDDPVVEKIDEILPQSQCGQCGYPGCRPYAEAISCNGEKINRCAPGGEAVMLKIAELLNV. Residues C49, C52, C57, C74, C117, C120, C123, C127, C147, C150, C153, and C157 each contribute to the [4Fe-4S] cluster site. 4Fe-4S ferredoxin-type domains lie at 108 to 137 and 138 to 167; these read MVAV…GATR and VMHT…LQPV.

This sequence belongs to the 4Fe4S bacterial-type ferredoxin family. RnfB subfamily. The complex is composed of six subunits: RsxA, RsxB, RsxC, RsxD, RsxE and RsxG. The cofactor is [4Fe-4S] cluster.

Its subcellular location is the cell inner membrane. Functionally, part of a membrane-bound complex that couples electron transfer with translocation of ions across the membrane. Required to maintain the reduced state of SoxR. The protein is Ion-translocating oxidoreductase complex subunit B of Shigella boydii serotype 4 (strain Sb227).